Consider the following 348-residue polypeptide: tRNA N6-adenosine threonylcarbamoyltransferase (348 aa).

Residues histidine 120 and histidine 124 each coordinate Fe cation. Substrate contacts are provided by residues 143–147, aspartate 176, glycine 189, and asparagine 282; that span reads LVSGG. Aspartate 310 is a Fe cation binding site.

The protein belongs to the KAE1 / TsaD family. The cofactor is Fe(2+).

It is found in the cytoplasm. The catalysed reaction is L-threonylcarbamoyladenylate + adenosine(37) in tRNA = N(6)-L-threonylcarbamoyladenosine(37) in tRNA + AMP + H(+). Functionally, required for the formation of a threonylcarbamoyl group on adenosine at position 37 (t(6)A37) in tRNAs that read codons beginning with adenine. Is involved in the transfer of the threonylcarbamoyl moiety of threonylcarbamoyl-AMP (TC-AMP) to the N6 group of A37, together with TsaE and TsaB. TsaD likely plays a direct catalytic role in this reaction. The polypeptide is tRNA N6-adenosine threonylcarbamoyltransferase (Paracidovorax citrulli (strain AAC00-1) (Acidovorax citrulli)).